The sequence spans 512 residues: Bifunctional purine biosynthesis protein PurH (512 aa).

The MGS-like domain maps to 1-150; sequence MIGEERVVRA…KNFPAVLVLV (150 aa).

Belongs to the PurH family.

The enzyme catalyses (6R)-10-formyltetrahydrofolate + 5-amino-1-(5-phospho-beta-D-ribosyl)imidazole-4-carboxamide = 5-formamido-1-(5-phospho-D-ribosyl)imidazole-4-carboxamide + (6S)-5,6,7,8-tetrahydrofolate. It catalyses the reaction IMP + H2O = 5-formamido-1-(5-phospho-D-ribosyl)imidazole-4-carboxamide. It functions in the pathway purine metabolism; IMP biosynthesis via de novo pathway; 5-formamido-1-(5-phospho-D-ribosyl)imidazole-4-carboxamide from 5-amino-1-(5-phospho-D-ribosyl)imidazole-4-carboxamide (10-formyl THF route): step 1/1. Its pathway is purine metabolism; IMP biosynthesis via de novo pathway; IMP from 5-formamido-1-(5-phospho-D-ribosyl)imidazole-4-carboxamide: step 1/1. The polypeptide is Bifunctional purine biosynthesis protein PurH (Chloroflexus aurantiacus (strain ATCC 29366 / DSM 635 / J-10-fl)).